A 412-amino-acid polypeptide reads, in one-letter code: D-nopaline dehydrogenase (412 aa).

The protein belongs to the lysopine/nopaline/octopine/opine/vitopine dehydrogenases family. In terms of assembly, homotetramer.

It catalyses the reaction D-nopaline + NADP(+) + H2O = L-arginine + 2-oxoglutarate + NADPH + H(+). This Agrobacterium vitis (Rhizobium vitis) protein is D-nopaline dehydrogenase (nos).